Here is a 442-residue protein sequence, read N- to C-terminus: D-serine dehydratase (442 aa).

K118 carries the post-translational modification N6-(pyridoxal phosphate)lysine.

This sequence belongs to the serine/threonine dehydratase family. DsdA subfamily. Monomer. It depends on pyridoxal 5'-phosphate as a cofactor.

It catalyses the reaction D-serine = pyruvate + NH4(+). The polypeptide is D-serine dehydratase (Escherichia coli O157:H7).